Here is a 388-residue protein sequence, read N- to C-terminus: Phosphopentomutase (388 aa).

Residues Asp10, Asp282, His287, Asp323, His324, and His335 each coordinate Mn(2+).

The protein belongs to the phosphopentomutase family. It depends on Mn(2+) as a cofactor.

It localises to the cytoplasm. It carries out the reaction 2-deoxy-alpha-D-ribose 1-phosphate = 2-deoxy-D-ribose 5-phosphate. It catalyses the reaction alpha-D-ribose 1-phosphate = D-ribose 5-phosphate. The protein operates within carbohydrate degradation; 2-deoxy-D-ribose 1-phosphate degradation; D-glyceraldehyde 3-phosphate and acetaldehyde from 2-deoxy-alpha-D-ribose 1-phosphate: step 1/2. Functionally, isomerase that catalyzes the conversion of deoxy-ribose 1-phosphate (dRib-1-P) and ribose 1-phosphate (Rib-1-P) to deoxy-ribose 5-phosphate (dRib-5-P) and ribose 5-phosphate (Rib-5-P), respectively. In Carboxydothermus hydrogenoformans (strain ATCC BAA-161 / DSM 6008 / Z-2901), this protein is Phosphopentomutase.